Consider the following 402-residue polypeptide: Protein FAM53A (402 aa).

At Ser-119 the chain carries Phosphoserine. A disordered region spans residues 170–215 (LVPGLPRRPVSPAGPTSPLTPRPASASSGFVDGSEGSTSSGPPWLS). The Nuclear localization signal motif lies at 273 to 281 (RRVRRKRRR). 2 positions are modified to phosphoserine: Ser-306 and Ser-309. Polar residues predominate over residues 323 to 333 (TLVSSPCNSQG). Positions 323-402 (TLVSSPCNSQ…DLDLEQIENN (80 aa)) are disordered. Over residues 336–345 (GIITPSSSPR) the composition is skewed to low complexity.

Belongs to the FAM53 family.

The protein resides in the nucleus. In terms of biological role, may play an important role in neural development; the dorsomedial roof of the third ventricle. This is Protein FAM53A from Mus musculus (Mouse).